Here is a 199-residue protein sequence, read N- to C-terminus: Stress response protein SCP2 (199 aa).

The protein belongs to the CAPAB/TerDEXZ family.

It is found in the cytoplasm. The polypeptide is Stress response protein SCP2 (yceC) (Bacillus subtilis (strain 168)).